The following is a 395-amino-acid chain: GPI-anchor transamidase (395 aa).

Residues M1–A27 form the signal peptide. Residues S28–G368 lie on the Lumenal side of the membrane. D79, I82, E118, and D120 together coordinate Ca(2+). Residue H164 is the Proton donor of the active site. Catalysis depends on C206, which acts as the Nucleophile; acyl-thioester intermediate. C206, S232, and S234 together coordinate a protein. The segment at D231–Q236 is autoinhibitory loop. Residues C275 and C280 are joined by a disulfide bond. A helical membrane pass occupies residues G369–T385. Over Y386–F395 the chain is Cytoplasmic.

Belongs to the peptidase C13 family. As to quaternary structure, heteropentamer. Part of the GPI-anchor transamidase complex, consisting of PIGK, PIGT, PIGS, PIGU and GAA1. Interacts with GPAA1. Interacts with PIGT; this interaction, via a disulfide link, stabilizes the expression of GAA1 and PIGK and links them to PIGS. Post-translationally, the disulfide bond between PIGK/GPI8 and PIGT is important for normal enzyme activity.

The protein localises to the endoplasmic reticulum membrane. Its pathway is glycolipid biosynthesis; glycosylphosphatidylinositol-anchor biosynthesis. Its activity is regulated as follows. In the absence of proproteins substrates, exists in an inactive state with a disrupted catalytic site by an autoinhibitory loop. The binding of proprotein substrates, particularly the CSP region, to GPI-T triggers concerted conformational changes that alleviate the inhibition by the autoinhibitory loop. Meanwhile, proprotein residues near the omega- site induce the formation of a catalytic cleft for catalysis, following which the products are released and GPI-T reverts to the inactive state. Its function is as follows. Catalytic subunit of the glycosylphosphatidylinositol-anchor (GPI-anchor) transamidase (GPI-T) complex that catalyzes the formation of the linkage between a proprotein and a GPI-anchor and participates in GPI anchored protein biosynthesis. Recognizes diverse proproteins at a C-terminal signal peptide (CSP) region that lacks consensus sequence and replaces it with a GPI-anchor via a transamidation reaction. Transamidation catalysis reaction follows a two-phase mechanism. In the acyl-enzyme phase, the carbonyl group of the proproteins's omega-site undergoes a nucleophilic attack forming an enzyme-substrate thioester bond. Followed by a general acid catalysis that allows CSP releasing, regenerating the carbonyl, and forming the acyl-enzyme intermediate. In the GPI-anchor attachment phase, the amino group of the GPI-anchor's ethanolamine phosphate, the one on third mannose (EtNP3), mediates a nucleophilic attack on the carbonyl of the acyl-enzyme intermediate, replacing the CSP, allowing GPI-anchor attachment to the omega-residue, therefore forming the product and freeing the enzyme. The polypeptide is GPI-anchor transamidase (Pongo abelii (Sumatran orangutan)).